The sequence spans 327 residues: Carboxylesterase 20 (327 aa).

An Involved in the stabilization of the negatively charged intermediate by the formation of the oxyanion hole motif is present at residues 87 to 89 (HGG). Ser166 (nucleophile) is an active-site residue. Catalysis depends on residues Asp272 and His302.

Belongs to the 'GDXG' lipolytic enzyme family. As to expression, expressed in roots, stems, flowers and siliques.

It catalyses the reaction a carboxylic ester + H2O = an alcohol + a carboxylate + H(+). Esterase activity measured in vitro with the synthetic substrate p-nitrophenyl acetate (pNPA) is inhibited by strigolactone. In terms of biological role, carboxylesterase that possesses esterase activity in vitro with the synthetic substrate p-nitrophenyl acetate (pNPA). Binds strigolactones, but is not able to hydrolyze them. May be involved in the regulation of shoot branching. The polypeptide is Carboxylesterase 20 (Arabidopsis thaliana (Mouse-ear cress)).